Reading from the N-terminus, the 344-residue chain is Fructose-bisphosphate aldolase (344 aa).

Serine 53 lines the D-glyceraldehyde 3-phosphate pocket. The active-site Proton donor is aspartate 95. Zn(2+) is bound by residues histidine 96, aspartate 131, glutamate 161, and histidine 212. Glycine 213 is a binding site for dihydroxyacetone phosphate. Histidine 252 lines the Zn(2+) pocket. Dihydroxyacetone phosphate contacts are provided by residues 253-255 (GGS) and 274-277 (NVDT).

It belongs to the class II fructose-bisphosphate aldolase family. Zn(2+) is required as a cofactor.

It carries out the reaction beta-D-fructose 1,6-bisphosphate = D-glyceraldehyde 3-phosphate + dihydroxyacetone phosphate. Its pathway is carbohydrate degradation; glycolysis; D-glyceraldehyde 3-phosphate and glycerone phosphate from D-glucose: step 4/4. In terms of biological role, catalyzes the aldol condensation of dihydroxyacetone phosphate (DHAP or glycerone-phosphate) with glyceraldehyde 3-phosphate (G3P) to form fructose 1,6-bisphosphate (FBP) in gluconeogenesis and the reverse reaction in glycolysis. This Mycobacterium bovis (strain ATCC BAA-935 / AF2122/97) protein is Fructose-bisphosphate aldolase (fba).